We begin with the raw amino-acid sequence, 350 residues long: Phosphotriesterase-related protein (350 aa).

Residues histidine 22, histidine 24, glutamate 169, histidine 201, histidine 230, and aspartate 298 each coordinate a divalent metal cation.

Belongs to the metallo-dependent hydrolases superfamily. Phosphotriesterase family. A divalent metal cation is required as a cofactor.

The polypeptide is Phosphotriesterase-related protein (Drosophila yakuba (Fruit fly)).